The chain runs to 419 residues: 3-isopropylmalate dehydratase large subunit (419 aa).

Cys301, Cys361, and Cys364 together coordinate [4Fe-4S] cluster.

This sequence belongs to the aconitase/IPM isomerase family. LeuC type 2 subfamily. In terms of assembly, heterodimer of LeuC and LeuD. Requires [4Fe-4S] cluster as cofactor.

It catalyses the reaction (2R,3S)-3-isopropylmalate = (2S)-2-isopropylmalate. The protein operates within amino-acid biosynthesis; L-leucine biosynthesis; L-leucine from 3-methyl-2-oxobutanoate: step 2/4. Functionally, catalyzes the isomerization between 2-isopropylmalate and 3-isopropylmalate, via the formation of 2-isopropylmaleate. The sequence is that of 3-isopropylmalate dehydratase large subunit from Campylobacter hominis (strain ATCC BAA-381 / DSM 21671 / CCUG 45161 / LMG 19568 / NCTC 13146 / CH001A).